We begin with the raw amino-acid sequence, 107 residues long: Large ribosomal subunit protein uL24 (107 aa).

The protein belongs to the universal ribosomal protein uL24 family. In terms of assembly, part of the 50S ribosomal subunit.

Its function is as follows. One of two assembly initiator proteins, it binds directly to the 5'-end of the 23S rRNA, where it nucleates assembly of the 50S subunit. Functionally, one of the proteins that surrounds the polypeptide exit tunnel on the outside of the subunit. This is Large ribosomal subunit protein uL24 from Streptomyces coelicolor (strain ATCC BAA-471 / A3(2) / M145).